A 130-amino-acid polypeptide reads, in one-letter code: Succinate dehydrogenase cytochrome b556 subunit (130 aa).

Topologically, residues 1-26 are cytoplasmic; sequence MADVNRGNRPLSPHLQVYRLPLAAIT. The chain crosses the membrane as a helical span at residues 27 to 52; sequence SIMTRITGHALVAGIVLITWWLVAAV. Topologically, residues 53–68 are periplasmic; that stretch reads TSPGAFACADWVVRSW. Residues 69-89 traverse the membrane as a helical segment; it reads LGFIILTGSMWALWYHLLAGL. H84 lines the heme pocket. At 90 to 109 the chain is on the cytoplasmic side; the sequence is RHLFYDAGYGLEIEQAHKSS. Residues 110–130 traverse the membrane as a helical segment; that stretch reads QALIAGSVVLAVLTLIVFFVF.

This sequence belongs to the cytochrome b560 family. As to quaternary structure, part of an enzyme complex containing four subunits: a flavoprotein, an iron-sulfur protein, plus two membrane-anchoring proteins, SdhC and SdhD. The complex can form homotrimers. Heme is required as a cofactor.

The protein localises to the cell inner membrane. Its pathway is carbohydrate metabolism; tricarboxylic acid cycle. Membrane-anchoring subunit of succinate dehydrogenase (SDH). This chain is Succinate dehydrogenase cytochrome b556 subunit (sdhC), found in Paracoccus denitrificans.